The primary structure comprises 215 residues: CASP-like protein 1U3 (215 aa).

At 1–13 the chain is on the cytoplasmic side; the sequence is MHDEEKKEPKWVT. Residues 14 to 34 form a helical membrane-spanning segment; sequence AVSIAGRIAGMGLAVAAAVLM. Over 35–68 the chain is Extracellular; sequence STASQCTVYYAAPAASAYGGAARARTVTYSDFPP. The helical transmembrane segment at 69–89 threads the bilayer; that stretch reads FVFLVGAASIAAFLEAIAIFL. Residues 90–105 are Cytoplasmic-facing; it reads VVWKKGKDKTTKVLMP. A helical transmembrane segment spans residues 106 to 126; sequence LLGVAVPALLYSATGAAFAAV. The Extracellular portion of the chain corresponds to 127 to 161; that stretch reads SDMSYCSANGKRVSICAGSAAAGGGVSGGTNFCSQ. The chain crosses the membrane as a helical span at residues 162-182; the sequence is VHIAVYLSLAAAVAVSVAEVV. Residues 183–215 lie on the Cytoplasmic side of the membrane; it reads RGLGGSASGGGSDSDSSSSSESGGCDHGCHHKH. Residues 187–215 are disordered; that stretch reads GSASGGGSDSDSSSSSESGGCDHGCHHKH. A compositionally biased stretch (low complexity) spans 195–205; it reads DSDSSSSSESG.

The protein belongs to the Casparian strip membrane proteins (CASP) family. In terms of assembly, homodimer and heterodimers.

The protein localises to the cell membrane. This Sorghum bicolor (Sorghum) protein is CASP-like protein 1U3.